A 115-amino-acid chain; its full sequence is Ribonuclease P protein component (115 aa).

It belongs to the RnpA family. Consists of a catalytic RNA component (M1 or rnpB) and a protein subunit.

The catalysed reaction is Endonucleolytic cleavage of RNA, removing 5'-extranucleotides from tRNA precursor.. Functionally, RNaseP catalyzes the removal of the 5'-leader sequence from pre-tRNA to produce the mature 5'-terminus. It can also cleave other RNA substrates such as 4.5S RNA. The protein component plays an auxiliary but essential role in vivo by binding to the 5'-leader sequence and broadening the substrate specificity of the ribozyme. The sequence is that of Ribonuclease P protein component from Buchnera aphidicola subsp. Acyrthosiphon pisum (strain APS) (Acyrthosiphon pisum symbiotic bacterium).